The following is a 622-amino-acid chain: Chaperone protein HscA homolog (622 aa).

This sequence belongs to the heat shock protein 70 family.

Functionally, chaperone involved in the maturation of iron-sulfur cluster-containing proteins. Has a low intrinsic ATPase activity which is markedly stimulated by HscB. This is Chaperone protein HscA homolog from Burkholderia cenocepacia (strain HI2424).